A 340-amino-acid polypeptide reads, in one-letter code: Heat-inducible transcription repressor HrcA (340 aa).

It belongs to the HrcA family.

Its function is as follows. Negative regulator of class I heat shock genes (grpE-dnaK-dnaJ and groELS operons). Prevents heat-shock induction of these operons. This chain is Heat-inducible transcription repressor HrcA, found in Burkholderia cenocepacia (strain ATCC BAA-245 / DSM 16553 / LMG 16656 / NCTC 13227 / J2315 / CF5610) (Burkholderia cepacia (strain J2315)).